We begin with the raw amino-acid sequence, 475 residues long: Aspartyl/glutamyl-tRNA(Asn/Gln) amidotransferase subunit B (475 aa).

This sequence belongs to the GatB/GatE family. GatB subfamily. As to quaternary structure, heterotrimer of A, B and C subunits.

The enzyme catalyses L-glutamyl-tRNA(Gln) + L-glutamine + ATP + H2O = L-glutaminyl-tRNA(Gln) + L-glutamate + ADP + phosphate + H(+). The catalysed reaction is L-aspartyl-tRNA(Asn) + L-glutamine + ATP + H2O = L-asparaginyl-tRNA(Asn) + L-glutamate + ADP + phosphate + 2 H(+). In terms of biological role, allows the formation of correctly charged Asn-tRNA(Asn) or Gln-tRNA(Gln) through the transamidation of misacylated Asp-tRNA(Asn) or Glu-tRNA(Gln) in organisms which lack either or both of asparaginyl-tRNA or glutaminyl-tRNA synthetases. The reaction takes place in the presence of glutamine and ATP through an activated phospho-Asp-tRNA(Asn) or phospho-Glu-tRNA(Gln). This is Aspartyl/glutamyl-tRNA(Asn/Gln) amidotransferase subunit B from Bacillus cereus (strain ATCC 10987 / NRS 248).